The sequence spans 148 residues: Protein-arginine-phosphatase (148 aa).

The Nucleophile role is filled by C9. 10-15 (TGNTCR) contacts substrate. R15 is an active-site residue. Catalysis depends on D117, which acts as the Proton donor.

Belongs to the low molecular weight phosphotyrosine protein phosphatase family. As to quaternary structure, is present in solution as a mixture of monomers, dimers and higher order oligomers (trimers and tetramers).

The enzyme catalyses N(omega)-phospho-L-arginyl-[protein] + H2O = L-arginyl-[protein] + phosphate. With respect to regulation, irreversibly inhibited by the synthetic inhibitor cyc-SeCN-amidine, which inactivates the enzyme by inducing disulfide bond formation between the two active site cysteine residues Cys-9 and Cys-14. Functionally, catalyzes the specific dephosphorylation of phosphoarginine residues in proteins. Probably counteracts the protein arginine kinase McsB in vivo. Exhibits almost no activity against pTyr peptides. Protein arginine phosphorylation has a physiologically important role and is involved in the regulation of many critical cellular processes, such as protein homeostasis, motility, competence, and stringent and stress responses, by regulating gene expression and protein activity. The sequence is that of Protein-arginine-phosphatase (ywle) from Geobacillus stearothermophilus (Bacillus stearothermophilus).